The primary structure comprises 503 residues: Cytochrome P450 11B2, mitochondrial (503 aa).

The N-terminal 24 residues, 1-24 (MALRAKAEVCVAAPWLSLQRARAL), are a transit peptide targeting the mitochondrion. F381 serves as a coordination point for 21-hydroxyprogesterone. C450 contacts heme.

This sequence belongs to the cytochrome P450 family. It depends on heme as a cofactor. As to expression, expressed sporadically in the zona glomerulosa (zG) of the adrenal cortex (conventional zonation), as well as in aldosterone-producing cell clusters (APCCs) composed of morphological zG cells in contact with the capsule (variegated zonation).

It is found in the mitochondrion inner membrane. It carries out the reaction a steroid + 2 reduced [adrenodoxin] + O2 + 2 H(+) = an 11beta-hydroxysteroid + 2 oxidized [adrenodoxin] + H2O. The enzyme catalyses 21-hydroxyprogesterone + 2 reduced [adrenodoxin] + O2 + 2 H(+) = corticosterone + 2 oxidized [adrenodoxin] + H2O. The catalysed reaction is corticosterone + 2 reduced [adrenodoxin] + O2 + 2 H(+) = 18-hydroxycorticosterone + 2 oxidized [adrenodoxin] + H2O. It catalyses the reaction 18-hydroxycorticosterone + 2 reduced [adrenodoxin] + O2 + 2 H(+) = aldosterone + 2 oxidized [adrenodoxin] + 2 H2O. It carries out the reaction 11-deoxycortisol + 2 reduced [adrenodoxin] + O2 + 2 H(+) = cortisol + 2 oxidized [adrenodoxin] + H2O. The enzyme catalyses 21-hydroxyprogesterone + 2 reduced [adrenodoxin] + O2 + 2 H(+) = 18-hydroxy-11-deoxycorticosterone + 2 oxidized [adrenodoxin] + H2O. The catalysed reaction is cortisol + 2 reduced [adrenodoxin] + O2 + 2 H(+) = 18-hydroxycortisol + 2 oxidized [adrenodoxin] + H2O. It catalyses the reaction 18-hydroxycortisol + 2 reduced [adrenodoxin] + O2 + 2 H(+) = 18-oxocortisol + 2 oxidized [adrenodoxin] + 2 H2O. The protein operates within steroid biosynthesis. Its function is as follows. A cytochrome P450 monooxygenase that catalyzes the biosynthesis of aldosterone, the main mineralocorticoid in the human body responsible for salt and water homeostasis, thus involved in blood pressure regulation, arterial hypertension, and the development of heart failure. Catalyzes three sequential oxidative reactions of 11-deoxycorticosterone (21-hydroxyprogesterone), namely 11-beta hydroxylation, followed by two successive oxidations at C18 yielding 18-hydroxy and then 18-oxo intermediates (that would not leave the enzyme active site during the consecutive hydroxylation reactions), ending with the formation of aldosterone. Can also produce 18-hydroxycortisol and 18-oxocortisol, derived from successive oxidations of cortisol at C18, normally found at very low levels, but significantly increased in primary aldosteronism, the most common form of secondary hypertension. Mechanistically, uses molecular oxygen inserting one oxygen atom into a substrate and reducing the second into a water molecule. Two electrons are provided by NADPH via a two-protein mitochondrial transfer system comprising flavoprotein FDXR (adrenodoxin/ferredoxin reductase) and nonheme iron-sulfur protein FDX1 or FDX2 (adrenodoxin/ferredoxin). Could also be involved in the androgen metabolic pathway. In Homo sapiens (Human), this protein is Cytochrome P450 11B2, mitochondrial.